The following is a 286-amino-acid chain: MKQLTETQQLKELIAQYRSEGRTIGFVPTMGFLHEGHLTLVEKASKENDIVVMSIFVNPTQFGPGEDYEAYPRDLKRDARLAEQAGADVLFTPSPSDMYKGEQNVAVQVKRRTDVLCGASRVGHFDGVATVLTKFFNLVKPTRAYFGLKDAQQAAVVDGLIEDFFMDIELVAVDTVREEDGLAKSSRNVYLTEQERKEAPMIYKALQQGAELIRDGERNPETVIKTVTDIIENTSGVIDYAELYAYPELTPLKTLNGKVILACAVQFSKARLIDNIIIDIDEWERS.

30–37 (MGFLHEGH) contributes to the ATP binding site. His37 functions as the Proton donor in the catalytic mechanism. Gln61 provides a ligand contact to (R)-pantoate. Gln61 serves as a coordination point for beta-alanine. 147–150 (GLKD) contributes to the ATP binding site. (R)-pantoate is bound at residue Gln153. ATP-binding positions include Val176 and 184-187 (KSSR).

Belongs to the pantothenate synthetase family. In terms of assembly, homodimer.

The protein localises to the cytoplasm. It carries out the reaction (R)-pantoate + beta-alanine + ATP = (R)-pantothenate + AMP + diphosphate + H(+). It participates in cofactor biosynthesis; (R)-pantothenate biosynthesis; (R)-pantothenate from (R)-pantoate and beta-alanine: step 1/1. In terms of biological role, catalyzes the condensation of pantoate with beta-alanine in an ATP-dependent reaction via a pantoyl-adenylate intermediate. This Bacillus velezensis (strain DSM 23117 / BGSC 10A6 / LMG 26770 / FZB42) (Bacillus amyloliquefaciens subsp. plantarum) protein is Pantothenate synthetase.